The chain runs to 459 residues: Methylenetetrahydrofolate--tRNA-(uracil-5-)-methyltransferase TrmFO (459 aa).

Position 26–31 (26–31) interacts with FAD; it reads GGGLAG.

It belongs to the MnmG family. TrmFO subfamily. The cofactor is FAD.

It is found in the cytoplasm. The enzyme catalyses uridine(54) in tRNA + (6R)-5,10-methylene-5,6,7,8-tetrahydrofolate + NADH + H(+) = 5-methyluridine(54) in tRNA + (6S)-5,6,7,8-tetrahydrofolate + NAD(+). The catalysed reaction is uridine(54) in tRNA + (6R)-5,10-methylene-5,6,7,8-tetrahydrofolate + NADPH + H(+) = 5-methyluridine(54) in tRNA + (6S)-5,6,7,8-tetrahydrofolate + NADP(+). Catalyzes the folate-dependent formation of 5-methyl-uridine at position 54 (M-5-U54) in all tRNAs. This chain is Methylenetetrahydrofolate--tRNA-(uracil-5-)-methyltransferase TrmFO, found in Synechococcus sp. (strain JA-2-3B'a(2-13)) (Cyanobacteria bacterium Yellowstone B-Prime).